We begin with the raw amino-acid sequence, 67 residues long: UPF0434 protein Patl_1782 (67 aa).

This sequence belongs to the UPF0434 family.

This is UPF0434 protein Patl_1782 from Pseudoalteromonas atlantica (strain T6c / ATCC BAA-1087).